The primary structure comprises 209 residues: LexA repressor (209 aa).

Positions 28-48 form a DNA-binding region, H-T-H motif; the sequence is RAEIAKELGFRSANAAEEHLK. Residues serine 126 and lysine 163 each act as for autocatalytic cleavage activity in the active site.

It belongs to the peptidase S24 family. As to quaternary structure, homodimer.

The enzyme catalyses Hydrolysis of Ala-|-Gly bond in repressor LexA.. Its function is as follows. Represses a number of genes involved in the response to DNA damage (SOS response), including recA and lexA. In the presence of single-stranded DNA, RecA interacts with LexA causing an autocatalytic cleavage which disrupts the DNA-binding part of LexA, leading to derepression of the SOS regulon and eventually DNA repair. This chain is LexA repressor, found in Vibrio cholerae serotype O1 (strain ATCC 39541 / Classical Ogawa 395 / O395).